The chain runs to 508 residues: UDP-N-acetylmuramoylalanine--D-glutamate ligase (508 aa).

138–144 (GTNGKTT) is a binding site for ATP.

Belongs to the MurCDEF family.

It is found in the cytoplasm. The catalysed reaction is UDP-N-acetyl-alpha-D-muramoyl-L-alanine + D-glutamate + ATP = UDP-N-acetyl-alpha-D-muramoyl-L-alanyl-D-glutamate + ADP + phosphate + H(+). The protein operates within cell wall biogenesis; peptidoglycan biosynthesis. Functionally, cell wall formation. Catalyzes the addition of glutamate to the nucleotide precursor UDP-N-acetylmuramoyl-L-alanine (UMA). The polypeptide is UDP-N-acetylmuramoylalanine--D-glutamate ligase (Bordetella avium (strain 197N)).